Reading from the N-terminus, the 390-residue chain is MSSFKFIPKKILLLGSGELGKELVVEAKRLGLEVIAIDKYENAPAMQLADNSFVIDMSDKEILKKKIKELNPDFVVPEIEALSIEALKELEDEGINIVPNARTVEITMNRDKIRDLASKELNIKTAKFSYVFNVDELEIKSSEIGFPLLIKPLMSSSGKGQSLVNRKEDLLLAWNDALKNSRGKIVGVILEEFLNFDYEFTLLTIRKTSGENIFCEPIGHEQYKGDYQCSWQPLDMNQSLINEARKMTTKILNNLNGSGIYGVEFFVRGKEVIFSELSPRPHDTGMVTLVSQNINEFELHLRAFLNLPIPNISLLKPSATRVIISDKESNTPSYSGLNEALELENTKVLIFGKPTAKKGRRMGVVLSTDDDLNIARENADKSALKIKIVS.

Residues 18-19 and Glu-78 each bind N(1)-(5-phospho-beta-D-ribosyl)glycinamide; that span reads EL. ATP-binding positions include Arg-110, Lys-151, 156–161, 191–194, and Glu-199; these read SSGKGQ and EEFL. Residues 115 to 305 form the ATP-grasp domain; the sequence is DLASKELNIK…EFELHLRAFL (191 aa). Mg(2+)-binding residues include Glu-264 and Glu-276. N(1)-(5-phospho-beta-D-ribosyl)glycinamide-binding positions include Asp-283, Lys-353, and 360–361; that span reads RR.

It belongs to the PurK/PurT family. Homodimer.

It carries out the reaction N(1)-(5-phospho-beta-D-ribosyl)glycinamide + formate + ATP = N(2)-formyl-N(1)-(5-phospho-beta-D-ribosyl)glycinamide + ADP + phosphate + H(+). It participates in purine metabolism; IMP biosynthesis via de novo pathway; N(2)-formyl-N(1)-(5-phospho-D-ribosyl)glycinamide from N(1)-(5-phospho-D-ribosyl)glycinamide (formate route): step 1/1. Involved in the de novo purine biosynthesis. Catalyzes the transfer of formate to 5-phospho-ribosyl-glycinamide (GAR), producing 5-phospho-ribosyl-N-formylglycinamide (FGAR). Formate is provided by PurU via hydrolysis of 10-formyl-tetrahydrofolate. In Prochlorococcus marinus subsp. pastoris (strain CCMP1986 / NIES-2087 / MED4), this protein is Formate-dependent phosphoribosylglycinamide formyltransferase.